We begin with the raw amino-acid sequence, 118 residues long: Large ribosomal subunit protein bL20 (118 aa).

Belongs to the bacterial ribosomal protein bL20 family.

Its function is as follows. Binds directly to 23S ribosomal RNA and is necessary for the in vitro assembly process of the 50S ribosomal subunit. It is not involved in the protein synthesizing functions of that subunit. This Bacillus mycoides (strain KBAB4) (Bacillus weihenstephanensis) protein is Large ribosomal subunit protein bL20.